The chain runs to 276 residues: Thiazole synthase (276 aa).

K117 functions as the Schiff-base intermediate with DXP in the catalytic mechanism. 1-deoxy-D-xylulose 5-phosphate contacts are provided by residues G178, A204–G205, and N226–T227.

This sequence belongs to the ThiG family. Homotetramer. Forms heterodimers with either ThiH or ThiS.

Its subcellular location is the plastid. The protein localises to the chloroplast. It catalyses the reaction [ThiS sulfur-carrier protein]-C-terminal-Gly-aminoethanethioate + 2-iminoacetate + 1-deoxy-D-xylulose 5-phosphate = [ThiS sulfur-carrier protein]-C-terminal Gly-Gly + 2-[(2R,5Z)-2-carboxy-4-methylthiazol-5(2H)-ylidene]ethyl phosphate + 2 H2O + H(+). It participates in cofactor biosynthesis; thiamine diphosphate biosynthesis. In terms of biological role, catalyzes the rearrangement of 1-deoxy-D-xylulose 5-phosphate (DXP) to produce the thiazole phosphate moiety of thiamine. Sulfur is provided by the thiocarboxylate moiety of the carrier protein ThiS. In vitro, sulfur can be provided by H(2)S. The polypeptide is Thiazole synthase (Gracilaria tenuistipitata var. liui (Red alga)).